Here is a 255-residue protein sequence, read N- to C-terminus: Type III pantothenate kinase (255 aa).

7 to 14 contributes to the ATP binding site; the sequence is DVGNTRLK. Substrate-binding positions include Tyr-96 and 103–106; that span reads GADR. Catalysis depends on Asp-105, which acts as the Proton acceptor. Position 133 (Thr-133) interacts with ATP. Thr-183 is a substrate binding site.

It belongs to the type III pantothenate kinase family. As to quaternary structure, homodimer. NH4(+) serves as cofactor. The cofactor is K(+).

It localises to the cytoplasm. It catalyses the reaction (R)-pantothenate + ATP = (R)-4'-phosphopantothenate + ADP + H(+). Its pathway is cofactor biosynthesis; coenzyme A biosynthesis; CoA from (R)-pantothenate: step 1/5. Functionally, catalyzes the phosphorylation of pantothenate (Pan), the first step in CoA biosynthesis. In Albidiferax ferrireducens (strain ATCC BAA-621 / DSM 15236 / T118) (Rhodoferax ferrireducens), this protein is Type III pantothenate kinase.